The primary structure comprises 236 residues: Uridylate kinase (236 aa).

10–13 (KLSG) contributes to the ATP binding site. Residue G52 participates in UMP binding. Positions 53 and 57 each coordinate ATP. UMP is bound by residues D72 and 133–140 (TGNPFFTT). ATP is bound by residues T160, Y166, and D169.

It belongs to the UMP kinase family. In terms of assembly, homohexamer.

It is found in the cytoplasm. It catalyses the reaction UMP + ATP = UDP + ADP. The protein operates within pyrimidine metabolism; CTP biosynthesis via de novo pathway; UDP from UMP (UMPK route): step 1/1. With respect to regulation, inhibited by UTP. Catalyzes the reversible phosphorylation of UMP to UDP. This chain is Uridylate kinase, found in Cupriavidus metallidurans (strain ATCC 43123 / DSM 2839 / NBRC 102507 / CH34) (Ralstonia metallidurans).